A 365-amino-acid chain; its full sequence is Aminotransferase poxL (365 aa).

Arg-92 serves as a coordination point for pyridoxal 5'-phosphate. Lys-193 carries the post-translational modification N6-(pyridoxal phosphate)lysine. Residue Glu-229 coordinates pyridoxal 5'-phosphate.

The protein belongs to the class-IV pyridoxal-phosphate-dependent aminotransferase family. Requires pyridoxal 5'-phosphate as cofactor.

It participates in secondary metabolite biosynthesis. Aminotransferase; part of the gene cluster that mediates the biosynthesis of oxaleimides, cytotoxic compounds containing an unusual disubstituted succinimide moiety. The first step of the pathway is provided by the HR-PKS poxF that serves in a new mode of collaborative biosynthesis with the PKS-NRPS poxE, by providing the olefin containing amino acid substrate via the synthesis of an ACP-bound dec-4-enoate. The cytochrome P450 monooxygenase poxM-catalyzed oxidation at the alpha-position creates the enzyme-bound 2-hydroxydec-4-enoyl-ACP thioester, which may be prone to spontaneous hydrolysis to yield 2-hydroxydec-4-enoic acid due to increased electrophilicity of the carbonyl. 2-hydroxydec-4-enoic acid can then be further oxidized by poxM to yield the alpha-ketoacid 2-oxodec-4-enoicacid, which is reductively aminated by the aminotransferase poxL to yield (S,E)-2-aminodec-4-enoic acid. The Hybrid PKS-NRPS synthetase poxE then performs condensation between the octaketide product of its PKS modules and the amino group of (S,E)-2-aminodec-4-enoic acid which is activated and incorporated by the adenylation domain. The resulting aminoacyl product can be cyclized by the Diels-Alderase PoxQ and reductively released by the reductive (R) domain of poxE to yield an aldehyde intermediate. The released aldehyde is then substrate for a Knoevenagel condensation by the hydrolyase poxO followed by an oxidation at the 5-position of the pyrrolidone ring. The presence of the olefin from the amino acid building block allows for migration of the substituted allyl group to occur. This allylic transposition reaction takes place in a conjugate addition, semipinacol-like fashion to yield a succinimide intermediate. Iterative two-electron oxidations of the C7 methyl of the succinimide intermediate to the carboxylic acid can be catalyzed by one of two remaining cytochrome P450 monooxygenasess poxC or poxD to yield oxaleimide A. Subsequent oxidation yields the maleimide scaffold oxaleimide I. Both oxaleimide A and oxaleimide I can undergo oxidative modifications in the decalin ring to yield the series of products oxaleimides B to H. This chain is Aminotransferase poxL, found in Penicillium oxalicum (strain 114-2 / CGMCC 5302) (Penicillium decumbens).